Here is a 325-residue protein sequence, read N- to C-terminus: NADH-quinone oxidoreductase subunit H (325 aa).

The next 8 helical transmembrane spans lie at 11–31, 81–101, 114–134, 154–174, 186–206, 237–257, 265–285, and 304–324; these read ILLTVLKAVVILLVVVTCGAF, VIFTLAPMIAFTSLLLAFAIV, IGILFFLMMAGLAVYAVLFAG, LSYEVFLGLSLMGVVAQAGSF, VWNVIPQFFGFITFAIAGVAV, FFVGEYIGIVTISALMVTLFF, LPPFIWFALKTAFFMMMFILI, and ICLPLTLINLLVTAAVILWQA.

The protein belongs to the complex I subunit 1 family. In terms of assembly, NDH-1 is composed of 13 different subunits. Subunits NuoA, H, J, K, L, M, N constitute the membrane sector of the complex.

The protein localises to the cell inner membrane. It catalyses the reaction a quinone + NADH + 5 H(+)(in) = a quinol + NAD(+) + 4 H(+)(out). NDH-1 shuttles electrons from NADH, via FMN and iron-sulfur (Fe-S) centers, to quinones in the respiratory chain. The immediate electron acceptor for the enzyme in this species is believed to be ubiquinone. Couples the redox reaction to proton translocation (for every two electrons transferred, four hydrogen ions are translocated across the cytoplasmic membrane), and thus conserves the redox energy in a proton gradient. This subunit may bind ubiquinone. This is NADH-quinone oxidoreductase subunit H from Escherichia coli O45:K1 (strain S88 / ExPEC).